A 196-amino-acid chain; its full sequence is ATP-dependent Clp protease proteolytic subunit (196 aa).

Serine 96 acts as the Nucleophile in catalysis. Histidine 121 is a catalytic residue.

This sequence belongs to the peptidase S14 family. Fourteen ClpP subunits assemble into 2 heptameric rings which stack back to back to give a disk-like structure with a central cavity, resembling the structure of eukaryotic proteasomes.

It localises to the cytoplasm. It catalyses the reaction Hydrolysis of proteins to small peptides in the presence of ATP and magnesium. alpha-casein is the usual test substrate. In the absence of ATP, only oligopeptides shorter than five residues are hydrolyzed (such as succinyl-Leu-Tyr-|-NHMec, and Leu-Tyr-Leu-|-Tyr-Trp, in which cleavage of the -Tyr-|-Leu- and -Tyr-|-Trp bonds also occurs).. Functionally, cleaves peptides in various proteins in a process that requires ATP hydrolysis. Has a chymotrypsin-like activity. Plays a major role in the degradation of misfolded proteins. In Streptococcus suis (strain 98HAH33), this protein is ATP-dependent Clp protease proteolytic subunit.